The sequence spans 222 residues: Cyclin-dependent kinase inhibitor 3 (222 aa).

The tract at residues 68–101 (KPSSLIEPKQPPRVHRSGIKESGSRSRVDSVNSV) is disordered. The span at 85-95 (GIKESGSRSRV) shows a compositional bias: basic and acidic residues.

Belongs to the CDI family. ICK/KRP subfamily. Specifically interacts with CDKA-1, but not with CDKB1-1.

Its subcellular location is the nucleus. The protein localises to the nucleoplasm. Functionally, binds and inhibits CYCD2-1/CDKA-1 complex kinase activity. May target specifically CDKA-1. This chain is Cyclin-dependent kinase inhibitor 3 (KRP3), found in Arabidopsis thaliana (Mouse-ear cress).